Consider the following 418-residue polypeptide: Tektin-1 (418 aa).

4 coiled-coil regions span residues 20–107 (NKSQ…SYKE), 134–177 (QELQ…DLKD), 266–308 (NGLK…QQEG), and 332–383 (VAQY…ENTI).

It belongs to the tektin family. In terms of assembly, microtubule inner protein component of sperm flagellar doublet microtubules. In terms of processing, ubiquitinated, leading to its degradation. Deubiquitinated by USP16, promoting its stability. Predominantly expressed in testis.

The protein resides in the cytoplasm. It is found in the cytoskeleton. It localises to the cilium axoneme. Its subcellular location is the flagellum axoneme. Microtubule inner protein (MIP) part of the dynein-decorated doublet microtubules (DMTs) in cilia and flagellar axoneme. Forms filamentous polymers in the walls of ciliary and flagellar microtubules. The sequence is that of Tektin-1 (Tekt1) from Rattus norvegicus (Rat).